Here is a 131-residue protein sequence, read N- to C-terminus: Large-conductance mechanosensitive channel (131 aa).

3 consecutive transmembrane segments (helical) span residues phenylalanine 8–glycine 28, isoleucine 30–isoleucine 50, and glycine 67–valine 87.

It belongs to the MscL family. In terms of assembly, homopentamer.

It is found in the cell membrane. Its function is as follows. Channel that opens in response to stretch forces in the membrane lipid bilayer. May participate in the regulation of osmotic pressure changes within the cell. This chain is Large-conductance mechanosensitive channel, found in Geobacillus kaustophilus (strain HTA426).